Reading from the N-terminus, the 209-residue chain is Ribosomal RNA large subunit methyltransferase E (209 aa).

Residues Gly63, Trp65, Asp83, Asp99, and Asp124 each contribute to the S-adenosyl-L-methionine site. Lys164 acts as the Proton acceptor in catalysis.

It belongs to the class I-like SAM-binding methyltransferase superfamily. RNA methyltransferase RlmE family.

Its subcellular location is the cytoplasm. The enzyme catalyses uridine(2552) in 23S rRNA + S-adenosyl-L-methionine = 2'-O-methyluridine(2552) in 23S rRNA + S-adenosyl-L-homocysteine + H(+). Specifically methylates the uridine in position 2552 of 23S rRNA at the 2'-O position of the ribose in the fully assembled 50S ribosomal subunit. In Shewanella pealeana (strain ATCC 700345 / ANG-SQ1), this protein is Ribosomal RNA large subunit methyltransferase E.